A 297-amino-acid polypeptide reads, in one-letter code: Homoserine kinase (297 aa).

Residue 82 to 92 (PLTRGLGSSAS) participates in ATP binding.

It belongs to the GHMP kinase family. Homoserine kinase subfamily.

Its subcellular location is the cytoplasm. It catalyses the reaction L-homoserine + ATP = O-phospho-L-homoserine + ADP + H(+). Its pathway is amino-acid biosynthesis; L-threonine biosynthesis; L-threonine from L-aspartate: step 4/5. In terms of biological role, catalyzes the ATP-dependent phosphorylation of L-homoserine to L-homoserine phosphate. The protein is Homoserine kinase of Bacillus cereus (strain B4264).